The following is a 201-amino-acid chain: MSRYRGPRFKKIRRLGVLPGLTSKRPRSRSDLQTQLRFGKRSQYRIRLEEKQKLRFHYGLTERQLLKYVHIAGKAKGSTGQVLLQLLEMRLDNILFRLGMASTIPGARQLVNHRHILVNGRIVDIPSYRCKPLDIITTKDKERSKALIQNYLVSSPRGELPNHLTIDSLQYKGFVNQIIDSKWIGLKINELLVVEYYSRQT.

The S4 RNA-binding domain occupies 89 to 150 (MRLDNILFRL…KERSKALIQN (62 aa)).

It belongs to the universal ribosomal protein uS4 family. In terms of assembly, part of the 30S ribosomal subunit. Contacts protein S5. The interaction surface between S4 and S5 is involved in control of translational fidelity.

It is found in the plastid. Its subcellular location is the chloroplast. One of the primary rRNA binding proteins, it binds directly to 16S rRNA where it nucleates assembly of the body of the 30S subunit. Functionally, with S5 and S12 plays an important role in translational accuracy. The polypeptide is Small ribosomal subunit protein uS4c (rps4) (Phalaenopsis aphrodite subsp. formosana (Moth orchid)).